The chain runs to 886 residues: Alanine--tRNA ligase (886 aa).

Zn(2+)-binding residues include His-568, His-572, Cys-670, and His-674.

This sequence belongs to the class-II aminoacyl-tRNA synthetase family. Zn(2+) serves as cofactor.

It is found in the cytoplasm. The catalysed reaction is tRNA(Ala) + L-alanine + ATP = L-alanyl-tRNA(Ala) + AMP + diphosphate. Functionally, catalyzes the attachment of alanine to tRNA(Ala) in a two-step reaction: alanine is first activated by ATP to form Ala-AMP and then transferred to the acceptor end of tRNA(Ala). Also edits incorrectly charged Ser-tRNA(Ala) and Gly-tRNA(Ala) via its editing domain. This chain is Alanine--tRNA ligase, found in Prochlorococcus marinus (strain NATL1A).